Here is a 133-residue protein sequence, read N- to C-terminus: MSNHDPISDMLTRIRNASQKKHTTTSIPSSKMSLSIAKVLQKEGFISDINEEGEGYKSQIILGLKYSGKNKFPTIRSMQRVSKPGLRIYKNTRALPKVLGGLGVAIISTSKGVMSDRDARKQGIGGEVLCYVY.

This sequence belongs to the universal ribosomal protein uS8 family. In terms of assembly, part of the 30S ribosomal subunit. Contacts proteins S5 and S12.

One of the primary rRNA binding proteins, it binds directly to 16S rRNA central domain where it helps coordinate assembly of the platform of the 30S subunit. This Prochlorococcus marinus (strain MIT 9301) protein is Small ribosomal subunit protein uS8.